Here is a 184-residue protein sequence, read N- to C-terminus: MAEVLRPEMLDISNDTSSLASPKLLHVLAVDDSMVDRKFIERLLRVSSCKVTVVDSATRALQYLGLDGENNSSVGFEDLKINLIMTDYSMPGMTGYELLKKIKESSAFREIPVVIMSSENILPRIDRCLEEGAEDFLLKPVKLADVKRLRDSLMKAEERAFKNIMHKRELEANDIYSQLKRAKI.

The region spanning histidine 26–methionine 154 is the Response regulatory domain. Aspartate 87 is subject to 4-aspartylphosphate.

This sequence belongs to the ARR family. Type-A subfamily. Post-translationally, two-component system major event consists of a His-to-Asp phosphorelay between a sensor histidine kinase (HK) and a response regulator (RR). In plants, the His-to-Asp phosphorelay involves an additional intermediate named Histidine-containing phosphotransfer protein (HPt). This multistep phosphorelay consists of a His-Asp-His-Asp sequential transfer of a phosphate group between first a His and an Asp of the HK protein, followed by the transfer to a conserved His of the HPt protein and finally the transfer to an Asp in the receiver domain of the RR protein. Predominantly expressed in roots and shoot apical meristems.

The protein localises to the nucleus. Its function is as follows. Functions as a response regulator involved in His-to-Asp phosphorelay signal transduction system. Phosphorylation of the Asp residue in the receiver domain activates the ability of the protein to promote the transcription of target genes. Type-A response regulators seem to act as negative regulators of the cytokinin signaling. The polypeptide is Two-component response regulator ARR5 (ARR5) (Arabidopsis thaliana (Mouse-ear cress)).